The primary structure comprises 228 residues: 2,3-bisphosphoglycerate-dependent phosphoglycerate mutase (228 aa).

Residues 8–15 (RHGQSEWN), 21–22 (TG), Arg-60, 87–90 (ERHY), Lys-98, 114–115 (RR), and 180–181 (GN) each bind substrate. Residue His-9 is the Tele-phosphohistidine intermediate of the active site. The active-site Proton donor/acceptor is the Glu-87.

It belongs to the phosphoglycerate mutase family. BPG-dependent PGAM subfamily. Homodimer.

It carries out the reaction (2R)-2-phosphoglycerate = (2R)-3-phosphoglycerate. It functions in the pathway carbohydrate degradation; glycolysis; pyruvate from D-glyceraldehyde 3-phosphate: step 3/5. In terms of biological role, catalyzes the interconversion of 2-phosphoglycerate and 3-phosphoglycerate. The protein is 2,3-bisphosphoglycerate-dependent phosphoglycerate mutase of Zymomonas mobilis subsp. mobilis (strain ATCC 31821 / ZM4 / CP4).